Here is a 227-residue protein sequence, read N- to C-terminus: ATP-dependent dethiobiotin synthetase BioD (227 aa).

13–18 (NIGKTV) lines the ATP pocket. A Mg(2+)-binding site is contributed by threonine 17. The active site involves lysine 38. ATP is bound by residues aspartate 55 and 116–119 (EGIG). The Mg(2+) site is built by aspartate 55 and glutamate 116.

Belongs to the dethiobiotin synthetase family. In terms of assembly, homodimer. Requires Mg(2+) as cofactor.

It is found in the cytoplasm. It carries out the reaction (7R,8S)-7,8-diammoniononanoate + CO2 + ATP = (4R,5S)-dethiobiotin + ADP + phosphate + 3 H(+). It participates in cofactor biosynthesis; biotin biosynthesis; biotin from 7,8-diaminononanoate: step 1/2. Its function is as follows. Catalyzes a mechanistically unusual reaction, the ATP-dependent insertion of CO2 between the N7 and N8 nitrogen atoms of 7,8-diaminopelargonic acid (DAPA, also called 7,8-diammoniononanoate) to form a ureido ring. In Buchnera aphidicola subsp. Baizongia pistaciae (strain Bp), this protein is ATP-dependent dethiobiotin synthetase BioD.